We begin with the raw amino-acid sequence, 76 residues long: DNA-directed RNA polymerase subunit epsilon (76 aa).

This sequence belongs to the RNA polymerase subunit epsilon family. In terms of assembly, RNAP is composed of a core of 2 alpha, a beta and a beta' subunit. The core is associated with a delta subunit, and at least one of epsilon or omega. When a sigma factor is associated with the core the holoenzyme is formed, which can initiate transcription.

The catalysed reaction is RNA(n) + a ribonucleoside 5'-triphosphate = RNA(n+1) + diphosphate. A non-essential component of RNA polymerase (RNAP). The protein is DNA-directed RNA polymerase subunit epsilon of Streptococcus agalactiae serotype Ia (strain ATCC 27591 / A909 / CDC SS700).